Reading from the N-terminus, the 79-residue chain is UPF0154 protein llmg_1186 (79 aa).

The chain crosses the membrane as a helical span at residues 4 to 24 (ILAILLMVVCLLAGFFLGTWF).

The protein belongs to the UPF0154 family.

The protein localises to the cell membrane. The polypeptide is UPF0154 protein llmg_1186 (Lactococcus lactis subsp. cremoris (strain MG1363)).